A 415-amino-acid polypeptide reads, in one-letter code: Protein ROH1A (415 aa).

The segment at 184–219 (VSGGGGGGGGGNKTTERSWSFGRRSGGSSAASKGGA) is disordered. The segment covering 185-195 (SGGGGGGGGGN) has biased composition (gly residues). The span at 200–219 (RSWSFGRRSGGSSAASKGGA) shows a compositional bias: low complexity. The chain crosses the membrane as a helical span at residues 263–283 (MFIMSTVMVFVMWVLTAAVPC).

This sequence belongs to the ROH1 family. As to quaternary structure, interacts with EXO70A1 and EXO70C1. Binds to EXO70C2. As to expression, mainly expressed in cells expanding in a polar manner such as pollen and root hairs.

The protein resides in the membrane. Its subcellular location is the cytoplasm. It is found in the cytosol. In terms of biological role, required for seed coat mucilage deposition. In Arabidopsis thaliana (Mouse-ear cress), this protein is Protein ROH1A.